The primary structure comprises 289 residues: ATP synthase subunit a (289 aa).

The next 6 helical transmembrane spans lie at A43–F63, S101–V121, L160–I180, I193–A213, V232–I252, and A259–V279.

Belongs to the ATPase A chain family. F-type ATPases have 2 components, CF(1) - the catalytic core - and CF(0) - the membrane proton channel. CF(1) has five subunits: alpha(3), beta(3), gamma(1), delta(1), epsilon(1). CF(0) has three main subunits: a(1), b(2) and c(9-12). The alpha and beta chains form an alternating ring which encloses part of the gamma chain. CF(1) is attached to CF(0) by a central stalk formed by the gamma and epsilon chains, while a peripheral stalk is formed by the delta and b chains.

It localises to the cell inner membrane. Key component of the proton channel; it plays a direct role in the translocation of protons across the membrane. This Pseudomonas syringae pv. tomato (strain ATCC BAA-871 / DC3000) protein is ATP synthase subunit a.